The sequence spans 123 residues: Large ribosomal subunit protein bL17 (123 aa).

The protein belongs to the bacterial ribosomal protein bL17 family. As to quaternary structure, part of the 50S ribosomal subunit. Contacts protein L32.

The polypeptide is Large ribosomal subunit protein bL17 (Borrelia garinii subsp. bavariensis (strain ATCC BAA-2496 / DSM 23469 / PBi) (Borreliella bavariensis)).